The sequence spans 411 residues: Glucose-1-phosphate adenylyltransferase (411 aa).

Alpha-D-glucose 1-phosphate contacts are provided by residues Gly164, 179–180, and Ser197; that span reads EK.

This sequence belongs to the bacterial/plant glucose-1-phosphate adenylyltransferase family. In terms of assembly, homotetramer.

The enzyme catalyses alpha-D-glucose 1-phosphate + ATP + H(+) = ADP-alpha-D-glucose + diphosphate. The protein operates within glycan biosynthesis; glycogen biosynthesis. Its function is as follows. Involved in the biosynthesis of ADP-glucose, a building block required for the elongation reactions to produce glycogen. Catalyzes the reaction between ATP and alpha-D-glucose 1-phosphate (G1P) to produce pyrophosphate and ADP-Glc. The polypeptide is Glucose-1-phosphate adenylyltransferase (Corynebacterium kroppenstedtii (strain DSM 44385 / JCM 11950 / CIP 105744 / CCUG 35717)).